Consider the following 248-residue polypeptide: Probable transcriptional regulatory protein Dde_2325 (248 aa).

Basic residues predominate over residues 1-15; it reads MAGHSKWKNIQHRKG. Positions 1-22 are disordered; the sequence is MAGHSKWKNIQHRKGRQDAKKS.

It belongs to the TACO1 family.

The protein localises to the cytoplasm. This Oleidesulfovibrio alaskensis (strain ATCC BAA-1058 / DSM 17464 / G20) (Desulfovibrio alaskensis) protein is Probable transcriptional regulatory protein Dde_2325.